Here is a 377-residue protein sequence, read N- to C-terminus: Interferon gamma receptor 1 (377 aa).

An N-terminal signal peptide occupies residues 1-23; that stretch reads MRTQIYISVTVLILLLKKSDLEA. Residues 24 to 235 lie on the Extracellular side of the membrane; sequence VRVPSPESVS…IRRYTPFTVY (212 aa). Residues 26–117 form the Fibronectin type-III domain; the sequence is VPSPESVSVQ…DFFIFSFNEN (92 aa). Asparagine 78 and asparagine 186 each carry an N-linked (GlcNAc...) asparagine glycan. Residues 236–256 form a helical membrane-spanning segment; that stretch reads LYPVLGVTLTLLFITGIIILL. Residues 257 to 377 lie on the Cytoplasmic side of the membrane; it reads EKKCNSEMKK…TVDSYGPRLL (121 aa). The tract at residues 326–377 is disordered; that stretch reads VYSEDKNSYGPNDLVEDEQSDLSDFYDCPHAPKQKREMSPGDTVDSYGPRLL.

This sequence belongs to the type II cytokine receptor family. Highly expressed in spleen. Also detected in brain, kidney, gill, intestine and heart. Expressed at very low levels in muscle. In immune cell populations, shows highest expression in monocytes, and slightly lower expression in peripheral blood leukocytes, splenocytes, neutrophils and mature macrophages.

It is found in the cell membrane. In terms of biological role, receptor which shows binding specificity for the cytokine ifng1r (interferon gamma-related). In Carassius auratus (Goldfish), this protein is Interferon gamma receptor 1.